A 191-amino-acid polypeptide reads, in one-letter code: Glycerol-3-phosphate acyltransferase (191 aa).

5 helical membrane-spanning segments follow: residues L10 to A30, F57 to V77, F84 to F104, F118 to L138, and Y158 to I178.

This sequence belongs to the PlsY family. In terms of assembly, probably interacts with PlsX.

It localises to the cell inner membrane. The enzyme catalyses an acyl phosphate + sn-glycerol 3-phosphate = a 1-acyl-sn-glycero-3-phosphate + phosphate. The protein operates within lipid metabolism; phospholipid metabolism. Its function is as follows. Catalyzes the transfer of an acyl group from acyl-phosphate (acyl-PO(4)) to glycerol-3-phosphate (G3P) to form lysophosphatidic acid (LPA). This enzyme utilizes acyl-phosphate as fatty acyl donor, but not acyl-CoA or acyl-ACP. This Neorickettsia sennetsu (strain ATCC VR-367 / Miyayama) (Ehrlichia sennetsu) protein is Glycerol-3-phosphate acyltransferase.